Reading from the N-terminus, the 179-residue chain is Inner membrane-spanning protein YciB (179 aa).

A run of 5 helical transmembrane segments spans residues 11 to 31 (ILFFAVYKLQGIQAAAITLII), 52 to 69 (LIMGSAVVFFGSLSAYFN), 71 to 91 (LEFLKWKVTVVYALFSLILLV), 121 to 141 (LGWAVFFLLCMLINLYISQYL), and 149 to 169 (FKTFGILGMTLIATLVTGVYI).

It belongs to the YciB family.

It is found in the cell inner membrane. In terms of biological role, plays a role in cell envelope biogenesis, maintenance of cell envelope integrity and membrane homeostasis. In Histophilus somni (strain 129Pt) (Haemophilus somnus), this protein is Inner membrane-spanning protein YciB.